Reading from the N-terminus, the 470-residue chain is Asparagine--tRNA ligase (470 aa).

The protein belongs to the class-II aminoacyl-tRNA synthetase family. As to quaternary structure, homodimer.

It is found in the cytoplasm. It carries out the reaction tRNA(Asn) + L-asparagine + ATP = L-asparaginyl-tRNA(Asn) + AMP + diphosphate + H(+). The polypeptide is Asparagine--tRNA ligase (Blochmanniella pennsylvanica (strain BPEN)).